The primary structure comprises 552 residues: CTP synthase (552 aa).

The interval 1–270 (MTKYVFVTGG…DRIICEELKL (270 aa)) is amidoligase domain. Ser-13 is a binding site for CTP. UTP is bound at residue Ser-13. Residues 14-19 (SLGKGI) and Asp-71 contribute to the ATP site. Mg(2+) is bound by residues Asp-71 and Glu-144. CTP-binding positions include 151–153 (DIE), 191–196 (KTKPTQ), and Lys-227. UTP is bound by residues 191–196 (KTKPTQ) and Lys-227. The Glutamine amidotransferase type-1 domain maps to 295-547 (TIGMVGKYVD…VEAALANKQA (253 aa)). Residue Gly-356 participates in L-glutamine binding. The Nucleophile; for glutamine hydrolysis role is filled by Cys-383. Residues 384–387 (LGMQ), Glu-407, and Arg-473 contribute to the L-glutamine site. Catalysis depends on residues His-520 and Glu-522.

The protein belongs to the CTP synthase family. In terms of assembly, homotetramer.

It carries out the reaction UTP + L-glutamine + ATP + H2O = CTP + L-glutamate + ADP + phosphate + 2 H(+). The catalysed reaction is L-glutamine + H2O = L-glutamate + NH4(+). It catalyses the reaction UTP + NH4(+) + ATP = CTP + ADP + phosphate + 2 H(+). The protein operates within pyrimidine metabolism; CTP biosynthesis via de novo pathway; CTP from UDP: step 2/2. With respect to regulation, allosterically activated by GTP, when glutamine is the substrate; GTP has no effect on the reaction when ammonia is the substrate. The allosteric effector GTP functions by stabilizing the protein conformation that binds the tetrahedral intermediate(s) formed during glutamine hydrolysis. Inhibited by the product CTP, via allosteric rather than competitive inhibition. Its function is as follows. Catalyzes the ATP-dependent amination of UTP to CTP with either L-glutamine or ammonia as the source of nitrogen. Regulates intracellular CTP levels through interactions with the four ribonucleotide triphosphates. The polypeptide is CTP synthase (Burkholderia cenocepacia (strain HI2424)).